Consider the following 604-residue polypeptide: Phosphomethylpyrimidine synthase (604 aa).

Residues Asn-218, Met-247, Tyr-276, His-312, 332-334 (SRG), 373-376 (DGLR), and Glu-412 each bind substrate. A Zn(2+)-binding site is contributed by His-416. Residue Tyr-439 participates in substrate binding. His-480 is a binding site for Zn(2+). [4Fe-4S] cluster-binding residues include Cys-560, Cys-563, and Cys-568.

It belongs to the ThiC family. Homodimer. [4Fe-4S] cluster serves as cofactor.

It carries out the reaction 5-amino-1-(5-phospho-beta-D-ribosyl)imidazole + S-adenosyl-L-methionine = 4-amino-2-methyl-5-(phosphooxymethyl)pyrimidine + CO + 5'-deoxyadenosine + formate + L-methionine + 3 H(+). Its pathway is cofactor biosynthesis; thiamine diphosphate biosynthesis. Catalyzes the synthesis of the hydroxymethylpyrimidine phosphate (HMP-P) moiety of thiamine from aminoimidazole ribotide (AIR) in a radical S-adenosyl-L-methionine (SAM)-dependent reaction. This is Phosphomethylpyrimidine synthase from Zymomonas mobilis subsp. mobilis (strain ATCC 31821 / ZM4 / CP4).